Reading from the N-terminus, the 135-residue chain is Biglycan (135 aa).

LRR repeat units lie at residues 4–24, 25–46, 49–72, 73–95, and 96–117; these read KLNY…DLPE, TLNE…DLLR, KLYR…SFLP, TLRE…PDLK, and LLQV…DFCP. Residue asparagine 65 is glycosylated (N-linked (GlcNAc...) asparagine). Residue asparagine 106 is glycosylated (N-linked (GlcNAc...) asparagine).

This sequence belongs to the small leucine-rich proteoglycan (SLRP) family. SLRP class I subfamily. As to quaternary structure, homodimer. Forms a ternary complex with MFAP2 and ELN. Post-translationally, the two attached glycosaminoglycan chains can be either chondroitin sulfate or dermatan sulfate. As to expression, found in several connective tissues, especially in articular cartilages.

The protein resides in the secreted. The protein localises to the extracellular space. Its subcellular location is the extracellular matrix. May be involved in collagen fiber assembly. The protein is Biglycan (BGN) of Oryctolagus cuniculus (Rabbit).